A 430-amino-acid polypeptide reads, in one-letter code: Asparagine--tRNA ligase (430 aa).

Belongs to the class-II aminoacyl-tRNA synthetase family. In terms of assembly, homodimer.

It is found in the cytoplasm. The catalysed reaction is tRNA(Asn) + L-asparagine + ATP = L-asparaginyl-tRNA(Asn) + AMP + diphosphate + H(+). This chain is Asparagine--tRNA ligase, found in Oceanobacillus iheyensis (strain DSM 14371 / CIP 107618 / JCM 11309 / KCTC 3954 / HTE831).